Here is a 218-residue protein sequence, read N- to C-terminus: UPF0126 membrane protein SCO4104 (218 aa).

Transmembrane regions (helical) follow at residues 8-28 (LLAL…LTAV), 37-57 (GVVV…DVLI), 64-84 (AFLD…AFAV), 91-111 (LEPA…VIGA), 118-138 (GLAV…GGTI), 154-174 (LYAI…ETGV), and 179-199 (AALG…HFGI).

The protein belongs to the UPF0126 family.

The protein localises to the cell membrane. This is UPF0126 membrane protein SCO4104 from Streptomyces coelicolor (strain ATCC BAA-471 / A3(2) / M145).